The following is a 130-amino-acid chain: Small ribosomal subunit protein uS11 (130 aa).

The protein belongs to the universal ribosomal protein uS11 family. As to quaternary structure, part of the 30S ribosomal subunit. Interacts with proteins S7 and S18. Binds to IF-3.

Its function is as follows. Located on the platform of the 30S subunit, it bridges several disparate RNA helices of the 16S rRNA. Forms part of the Shine-Dalgarno cleft in the 70S ribosome. The polypeptide is Small ribosomal subunit protein uS11 (Thermoanaerobacter sp. (strain X514)).